Reading from the N-terminus, the 167-residue chain is Ribosome maturation factor RimM (167 aa).

Positions 93–165 constitute a PRC barrel domain; it reads KGVYYDFQLI…QVIIDPIPGL (73 aa).

Belongs to the RimM family. In terms of assembly, binds ribosomal protein uS19.

The protein resides in the cytoplasm. Functionally, an accessory protein needed during the final step in the assembly of 30S ribosomal subunit, possibly for assembly of the head region. Essential for efficient processing of 16S rRNA. May be needed both before and after RbfA during the maturation of 16S rRNA. It has affinity for free ribosomal 30S subunits but not for 70S ribosomes. This chain is Ribosome maturation factor RimM, found in Dehalococcoides mccartyi (strain ATCC BAA-2266 / KCTC 15142 / 195) (Dehalococcoides ethenogenes (strain 195)).